The primary structure comprises 693 residues: eEF1A lysine and N-terminal methyltransferase (693 aa).

It belongs to the methyltransferase superfamily.

The enzyme catalyses L-lysyl-[protein] + S-adenosyl-L-methionine = N(6)-methyl-L-lysyl-[protein] + S-adenosyl-L-homocysteine + H(+). It carries out the reaction N(6)-methyl-L-lysyl-[protein] + S-adenosyl-L-methionine = N(6),N(6)-dimethyl-L-lysyl-[protein] + S-adenosyl-L-homocysteine + H(+). The catalysed reaction is N-terminal glycyl-L-lysyl-L-glutamyl-[protein] + 3 S-adenosyl-L-methionine = N-terminal N,N,N-trimethyl-glycyl-L-lysyl-L-glutamyl-[protein] + 3 S-adenosyl-L-homocysteine + 3 H(+). In terms of biological role, dual methyltransferase that catalyzes methylation of elongation factor 1-alpha (eef1a1 and eef1a2) at two different positions, and is therefore involved in the regulation of mRNA translation. Via its C-terminus, methylates the N-terminus of eef1a1 and eef1a2. Via its N-terminus dimethylates lysine residues of eef1a1 and eef1a2. This is eEF1A lysine and N-terminal methyltransferase (mettl13) from Xenopus laevis (African clawed frog).